Consider the following 178-residue polypeptide: MAAPLGGMFSGQPPGPPQAPPGLPGQASLLQAAPGAPRPSSSTLVDELESSFEACFASLVSQDYVNGTDQEEIRTGVDQCIQKFLDIARQTECFFLQKRLQLSVQKPEQVIKEDVSELRNELQRKDALVQKHLTKLRHWQQVLEDINVQHKKPADIPQGSLAYLEQASANIPAPLKPT.

Residues 1 to 44 (MAAPLGGMFSGQPPGPPQAPPGLPGQASLLQAAPGAPRPSSSTL) form a disordered region. Residues 13 to 23 (PPGPPQAPPGL) show a composition bias toward pro residues. A coiled-coil region spans residues 109-145 (QVIKEDVSELRNELQRKDALVQKHLTKLRHWQQVLED).

This sequence belongs to the Mediator complex subunit 28 family. Component of the Mediator complex, which is composed of MED1, MED4, MED6, MED7, MED8, MED9, MED10, MED11, MED12, MED13, MED13L, MED14, MED15, MED16, MED17, MED18, MED19, MED20, MED21, MED22, MED23, MED24, MED25, MED26, MED27, MED29, MED30, MED31, CCNC, CDK8 and CDC2L6/CDK11. The MED12, MED13, CCNC and CDK8 subunits form a distinct module termed the CDK8 module. Mediator containing the CDK8 module is less active than Mediator lacking this module in supporting transcriptional activation. Individual preparations of the Mediator complex lacking one or more distinct subunits have been variously termed ARC, CRSP, DRIP, PC2, SMCC and TRAP. Forms a ternary complex with NF2/merlin and GRB2. Binds to actin. As to expression, widely expressed. Highly expressed in vascular tissues such as placenta, testis and liver.

It localises to the nucleus. It is found in the cytoplasm. The protein resides in the membrane. Its function is as follows. Component of the Mediator complex, a coactivator involved in the regulated transcription of nearly all RNA polymerase II-dependent genes. Mediator functions as a bridge to convey information from gene-specific regulatory proteins to the basal RNA polymerase II transcription machinery. Mediator is recruited to promoters by direct interactions with regulatory proteins and serves as a scaffold for the assembly of a functional preinitiation complex with RNA polymerase II and the general transcription factors. May be part of a complex containing NF2/merlin that participates in cellular signaling to the actin cytoskeleton downstream of tyrosine kinase signaling pathways. This Homo sapiens (Human) protein is Mediator of RNA polymerase II transcription subunit 28 (MED28).